The primary structure comprises 680 residues: Lipase 1 (680 aa).

A signal peptide spans 1–34 (MKSQNKYSIRKFSVGASSILIATLLFLSGGQAQA). The propeptide occupies 35-290 (AEKQVNMGNS…AKAKDDQTNK (256 aa)). Positions 82–259 (KNLHNDKTIS…PTKDNDKKNG (178 aa)) are disordered. A compositionally biased stretch (basic and acidic residues) spans 84–111 (LHNDKTISEENHRKTDDLNKDQLKDDKN). Composition is skewed to polar residues over residues 125 to 138 (KNNN…NQGL), 162 to 193 (SQDS…SQRE), and 204 to 223 (QPQQ…FNNE). Over residues 224-234 (QEVKPQKDEKT) the composition is skewed to basic and acidic residues. Residues 235–246 (LSVSDLKNNQKS) are compositionally biased toward polar residues. The Nucleophile role is filled by serine 408. Aspartate 600 functions as the Charge relay system in the catalytic mechanism. Aspartate 638 lines the Ca(2+) pocket. The active-site Charge relay system is the histidine 639. Ca(2+) is bound by residues aspartate 641, aspartate 646, and aspartate 649.

It belongs to the AB hydrolase superfamily. Lipase family.

It localises to the secreted. The enzyme catalyses a triacylglycerol + H2O = a diacylglycerol + a fatty acid + H(+). In Staphylococcus aureus (strain Mu50 / ATCC 700699), this protein is Lipase 1 (lip1).